The primary structure comprises 192 residues: Glycerol-3-phosphate acyltransferase (192 aa).

The next 5 membrane-spanning stretches (helical) occupy residues 4 to 24, 48 to 68, 74 to 94, 101 to 121, and 125 to 145; these read FAII…DVVI, LVLV…WVGY, YFEL…PIFF, GVAT…GSML, and LLIF…ALIL.

This sequence belongs to the PlsY family. In terms of assembly, probably interacts with PlsX.

The protein localises to the cell inner membrane. The enzyme catalyses an acyl phosphate + sn-glycerol 3-phosphate = a 1-acyl-sn-glycero-3-phosphate + phosphate. Its pathway is lipid metabolism; phospholipid metabolism. In terms of biological role, catalyzes the transfer of an acyl group from acyl-phosphate (acyl-PO(4)) to glycerol-3-phosphate (G3P) to form lysophosphatidic acid (LPA). This enzyme utilizes acyl-phosphate as fatty acyl donor, but not acyl-CoA or acyl-ACP. In Histophilus somni (strain 129Pt) (Haemophilus somnus), this protein is Glycerol-3-phosphate acyltransferase.